The sequence spans 518 residues: PTS system mannitol-specific EIICB component (518 aa).

At 1 to 31 (MDTMSNSQQNKGIGRKVQAFGSFLSSMIMPN) the chain is on the cytoplasmic side. One can recognise a PTS EIIC type-2 domain in the interval 20–352 (FGSFLSSMIM…LKFTKDPKQD (333 aa)). A helical transmembrane segment spans residues 32–53 (IGAFIAWGFIAAIFIDNGWFPN). The Extracellular portion of the chain corresponds to 54–57 (KDLA). A helical membrane pass occupies residues 58–78 (QLAGPMITYLIPLLIAFSGGR). Topologically, residues 79–142 (LIHDLRGGII…QGFEMLFNNF (64 aa)) are cytoplasmic. A helical membrane pass occupies residues 143–164 (SAGILGFIMTIFGFEVLAPIMK). Residues 165 to 173 (FIMHILSVG) are Extracellular-facing. Residues 174 to 194 (VEALVHAHLLPLVSILVEPAK) form a helical membrane-spanning segment. Over 195-281 (IVFLNNAINH…VLMRPLLFVS (87 aa)) the chain is Cytoplasmic. A helical transmembrane segment spans residues 282 to 301 (VILGGMTGVATYSLLDFGFK). Topologically, residues 302 to 321 (TPASPGSIIVYAINAPKGEF) are extracellular. The helical transmembrane segment at 322–343 (LHMLTGVVLAALVSFVVSALIL) threads the bilayer. Residues 344–518 (KFTKDPKQDL…LINNLKEDQD (175 aa)) are Cytoplasmic-facing. The interval 369–406 (SVASKLSAKDDNKAADNKTAETTTATAASNKAEDKDSD) is disordered. Over residues 375-387 (SAKDDNKAADNKT) the composition is skewed to basic and acidic residues. Residues 388–398 (AETTTATAASN) are compositionally biased toward low complexity. The 93-residue stretch at 426 to 518 (DHVIFACDAG…LINNLKEDQD (93 aa)) folds into the PTS EIIB type-2 domain. The Phosphocysteine intermediate role is filled by Cys432. Cys432 is modified (phosphocysteine; by EIIA).

As to quaternary structure, homodimer.

The protein resides in the cell membrane. It carries out the reaction D-mannitol(out) + N(pros)-phospho-L-histidyl-[protein] = D-mannitol 1-phosphate(in) + L-histidyl-[protein]. The phosphoenolpyruvate-dependent sugar phosphotransferase system (sugar PTS), a major carbohydrate active transport system, catalyzes the phosphorylation of incoming sugar substrates concomitantly with their translocation across the cell membrane. The enzyme II CmtAB PTS system is involved in D-mannitol transport. The polypeptide is PTS system mannitol-specific EIICB component (Staphylococcus carnosus).